The following is a 131-amino-acid chain: MRHRHGLRKLNRTSSHRLAMLRNMTVSLLRHEAIKTTLPKAKELRRVIEPILTLGKTDSLANKRLAFNRLRDREMVVKLFAELGPRYANRNGGYLRILKMGFRAGDNAPMAFIELLDRPETTEAVEDNSGE.

It belongs to the bacterial ribosomal protein bL17 family. As to quaternary structure, part of the 50S ribosomal subunit. Contacts protein L32.

The sequence is that of Large ribosomal subunit protein bL17 from Herminiimonas arsenicoxydans.